The following is an 887-amino-acid chain: Replication origin-binding protein (887 aa).

The disordered stretch occupies residues 1 to 28; that stretch reads MPSIGPIPTIPDEGSRGSSATAAPRRAM. Positions 93–258 constitute a Helicase ATP-binding domain; the sequence is PNNPSSRRVT…ASARGERSVH (166 aa). 106–113 lines the ATP pocket; that stretch reads APMGSGKT.

Belongs to the herpesviridae OriBP family. In terms of assembly, homodimer. Interacts with the major DNA-binding protein. Interacts with the DNA helicase/primase complex-associated protein and the polymerase accessory protein.

The protein resides in the host nucleus. Functionally, functions as a docking protein to recruit essential components of the viral replication machinery to viral DNA origins. In the presence of the major DNA-binding protein, opens dsDNA leading to a conformational change in the origin that facilitates DNA unwinding and subsequent replication. The chain is Replication origin-binding protein from Equus caballus (Horse).